The sequence spans 508 residues: Light-independent protochlorophyllide reductase subunit B (508 aa).

[4Fe-4S] cluster is bound at residue Asp-36. The active-site Proton donor is the Asp-294. A substrate-binding site is contributed by 429 to 430; sequence GM.

It belongs to the ChlB/BchB/BchZ family. As to quaternary structure, protochlorophyllide reductase is composed of three subunits; ChlL, ChlN and ChlB. Forms a heterotetramer of two ChlB and two ChlN subunits. [4Fe-4S] cluster serves as cofactor.

It carries out the reaction chlorophyllide a + oxidized 2[4Fe-4S]-[ferredoxin] + 2 ADP + 2 phosphate = protochlorophyllide a + reduced 2[4Fe-4S]-[ferredoxin] + 2 ATP + 2 H2O. It participates in porphyrin-containing compound metabolism; chlorophyll biosynthesis (light-independent). Functionally, component of the dark-operative protochlorophyllide reductase (DPOR) that uses Mg-ATP and reduced ferredoxin to reduce ring D of protochlorophyllide (Pchlide) to form chlorophyllide a (Chlide). This reaction is light-independent. The NB-protein (ChlN-ChlB) is the catalytic component of the complex. The protein is Light-independent protochlorophyllide reductase subunit B of Gloeothece citriformis (strain PCC 7424) (Cyanothece sp. (strain PCC 7424)).